The sequence spans 1109 residues: Protein argonaute 3 (1109 aa).

Over residues 1–13 (MAGRGGRDPRRGY) the composition is skewed to basic and acidic residues. 2 disordered regions span residues 1-83 (MAGR…GLVR) and 125-220 (DHRD…PLSK). 3 stretches are compositionally biased toward gly residues: residues 14-30 (DGGYGYPRGGGGQGGTN), 37-54 (RGGGRNGPRGGRFPGGRG), and 62-83 (DVLGGGQGGGRGTTAGAGGLVR). Residues 125–134 (DHRDQHDHQS) show a composition bias toward basic and acidic residues. A compositionally biased stretch (basic residues) spans 135 to 161 (QRHHHRHHHHQRQRHHHHHQRQQRRGS). A PAZ domain is found at 411-521 (SVLDLVKTMK…VPIEFCNIPE (111 aa)). The span at 527–545 (VARLDDKKSDNKGEQEKPS) shows a compositional bias: basic and acidic residues. The tract at residues 527-548 (VARLDDKKSDNKGEQEKPSTKT) is disordered. A Piwi domain is found at 720–1023 (LLFCPMLNRC…AAYRGRLYYE (304 aa)).

Belongs to the argonaute family. Ago subfamily.

Its function is as follows. Probably involved in the RNA silencing pathway. May bind to short RNAs such as microRNAs (miRNAs) or short interfering RNAs (siRNAs), and represses the translation of mRNAs which are complementary to them. This Oryza sativa subsp. japonica (Rice) protein is Protein argonaute 3 (AGO3).